The chain runs to 547 residues: Glucose-6-phosphate isomerase 2 (547 aa).

Glu351 functions as the Proton donor in the catalytic mechanism. Residues His382 and Lys508 contribute to the active site.

Belongs to the GPI family.

The protein resides in the cytoplasm. The enzyme catalyses alpha-D-glucose 6-phosphate = beta-D-fructose 6-phosphate. It functions in the pathway carbohydrate biosynthesis; gluconeogenesis. The protein operates within carbohydrate degradation; glycolysis; D-glyceraldehyde 3-phosphate and glycerone phosphate from D-glucose: step 2/4. Its function is as follows. Catalyzes the reversible isomerization of glucose-6-phosphate to fructose-6-phosphate. In Neisseria meningitidis serogroup B (strain ATCC BAA-335 / MC58), this protein is Glucose-6-phosphate isomerase 2.